The sequence spans 201 residues: Receptor expression-enhancing protein 1 (201 aa).

2 consecutive transmembrane segments (helical) span residues 1 to 21 (MVSWIISRLVVLIFGTLYPAY) and 35 to 55 (YVKWMMYWIIFALFTTAETFT). Serine 152 carries the post-translational modification Phosphoserine. Positions 158-201 (TIRGDGAPAPSGPPPPGTGRSSGKHSQPKMSRSASESAGSSGTA) are disordered. Low complexity predominate over residues 188 to 201 (SRSASESAGSSGTA).

Belongs to the DP1 family. As to quaternary structure, interacts with OLFR992. Interacts with SPAST and ATL1. Interacts (via C-terminus) with microtubules. Interacts with ZFYVE27. In terms of tissue distribution, detected in olfactory sensory neurons of the olfactory epithelium, and in total brain.

It localises to the membrane. The protein resides in the mitochondrion membrane. The protein localises to the endoplasmic reticulum. Its function is as follows. Required for endoplasmic reticulum (ER) network formation, shaping and remodeling; it links ER tubules to the cytoskeleton. May also enhance the cell surface expression of odorant receptors. The sequence is that of Receptor expression-enhancing protein 1 (Reep1) from Mus musculus (Mouse).